An 802-amino-acid chain; its full sequence is MMMDEDVEQATLVSYSDKPRTFPDMRSKTYSPLIIRILRNLNVRALSVLLLLSFGGIFYMGARTSPIIVFVFVVCIISFMLSVYLTKWVLAKDEGPPEMVQISDAIRDGAEGFLRTQYGTISKMAFLLAFVILCIYLFRNLTPQQEASGLGRTMSAYITVAAFLLGALCSGIAGYVGMWVSVRANVRVSSAARRSAREALQIAVRAGGFSALVVVGMAVIGIAILYSTFYVWLDVDSPGSMKVTDLPLLLVGYGFGASFVALFAQLGGGIYTKGADVGADLVGKVEHGIPEDDPRNPAVIADLVGDNVGDCAARGADLFESIAAEIISAMILGGTMAQKCKIEDPSGFILFPLVVHSFDLVISSIGILSIKGTRNASVKSPVEDPMVVLQKGYSLTIILAVLTFGASTRWLLYTEQAPSAWLNFFMCGLVGIITAYVFVWISRYYTDYKYEPVRTLALASSTGHGTNIIAGVSLGLESTALPVLVISVAIISAFWLGNTSGLIDEKGNPTGGLFGTAVATMGMLSTAAYVLTMDMFGPIADNAGGIVEMSQQPESVREITDVLDAVGNTTKATTKGFAIGSAALASFLLFSAYMDEVSAFANVSFKEVDIAIPEVFIGGLLGAMLIFLFSAWACAAVGRTAQEVVNEVRRQFIERPGIMDYKEKPDYGRCVAIVASSALREMIKPGALAIISPIAVGFVFRILGYYTGQPLLGAKVVAAMLMFATVCGILMALFLNTAGGAWDNAKKYIETGALGGKGSDSHKAAVTGDTVGDPFKDTAGPSIHVLIKMLATITLVMAPIFL.

6 helical membrane-spanning segments follow: residues 41 to 61 (LNVRALSVLLLLSFGGIFYMG), 66 to 86 (PIIVFVFVVCIISFMLSVYLT), 118 to 138 (YGTISKMAFLLAFVILCIYLF), 160 to 180 (VAAFLLGALCSGIAGYVGMWV), 206 to 226 (AGGFSALVVVGMAVIGIAILY), and 246 to 266 (LPLLLVGYGFGASFVALFAQL). Lysine 273 serves as a coordination point for substrate. The Mg(2+) site is built by aspartate 276, aspartate 280, and aspartate 306. Transmembrane regions (helical) follow at residues 348 to 368 (FILFPLVVHSFDLVISSIGIL), 386 to 406 (MVVLQKGYSLTIILAVLTFGA), 421 to 441 (WLNFFMCGLVGIITAYVFVWI), 468 to 491 (IIAGVSLGLESTALPVLVISVAII), and 511 to 531 (GGLFGTAVATMGMLSTAAYVL). The Mg(2+) site is built by aspartate 541 and asparagine 568. 4 helical membrane-spanning segments follow: residues 577-597 (FAIGSAALASFLLFSAYMDEV), 615-635 (VFIGGLLGAMLIFLFSAWACA), 686-706 (GALAIISPIAVGFVFRILGYY), and 716-736 (VVAAMLMFATVCGILMALFLN). Aspartate 743 and aspartate 773 together coordinate Mg(2+). Residue lysine 776 participates in substrate binding. The helical transmembrane segment at 782–802 (SIHVLIKMLATITLVMAPIFL) threads the bilayer.

It belongs to the H(+)-translocating pyrophosphatase (TC 3.A.10) family. K(+)-insensitive subfamily. Monomer.

Its subcellular location is the golgi apparatus membrane. The enzyme catalyses diphosphate + H2O + H(+)(in) = 2 phosphate + 2 H(+)(out). In Arabidopsis thaliana (Mouse-ear cress), this protein is Pyrophosphate-energized membrane proton pump 3 (AVPL2).